A 259-amino-acid polypeptide reads, in one-letter code: Adenosylcobinamide-GDP ribazoletransferase (259 aa).

Helical transmembrane passes span 36–56, 65–85, 108–128, 133–153, 175–195, 201–221, and 238–258; these read FSPLIGVLIGVLQVSVLILLL, MPFIAIALGLWITGGIHVDGL, IGASGIIALTINLLLQIAALF, LILFAIPIASFWGRYSQIWAI, GFLIESIPSYAFLSFLIFILI, IISTPNLIIGIIVGFLPALII, and GASVVLVETCMLIIFSIILPA.

It belongs to the CobS family. Requires Mg(2+) as cofactor.

It localises to the cell inner membrane. The catalysed reaction is alpha-ribazole + adenosylcob(III)inamide-GDP = adenosylcob(III)alamin + GMP + H(+). It carries out the reaction alpha-ribazole 5'-phosphate + adenosylcob(III)inamide-GDP = adenosylcob(III)alamin 5'-phosphate + GMP + H(+). The protein operates within cofactor biosynthesis; adenosylcobalamin biosynthesis; adenosylcobalamin from cob(II)yrinate a,c-diamide: step 7/7. Functionally, joins adenosylcobinamide-GDP and alpha-ribazole to generate adenosylcobalamin (Ado-cobalamin). Also synthesizes adenosylcobalamin 5'-phosphate from adenosylcobinamide-GDP and alpha-ribazole 5'-phosphate. This chain is Adenosylcobinamide-GDP ribazoletransferase, found in Prochlorococcus marinus (strain SARG / CCMP1375 / SS120).